The sequence spans 424 residues: Probable serine/threonine-protein kinase PBL12 (424 aa).

The Protein kinase domain occupies 88–368 (FSRSNMLGEG…CEVVKVLESI (281 aa)). ATP contacts are provided by residues 94–102 (LGEGGFGPV) and K123. The active-site Proton acceptor is D218.

The protein belongs to the protein kinase superfamily. Ser/Thr protein kinase family. As to expression, expressed specifically in roots.

The protein resides in the cell membrane. The catalysed reaction is L-seryl-[protein] + ATP = O-phospho-L-seryl-[protein] + ADP + H(+). It catalyses the reaction L-threonyl-[protein] + ATP = O-phospho-L-threonyl-[protein] + ADP + H(+). In terms of biological role, may play a role in the signal transduction pathway of osmotic stress. May be involved in plant defense signaling. This is Probable serine/threonine-protein kinase PBL12 from Arabidopsis thaliana (Mouse-ear cress).